Here is a 119-residue protein sequence, read N- to C-terminus: Large ribosomal subunit protein bL17 (119 aa).

Belongs to the bacterial ribosomal protein bL17 family. As to quaternary structure, part of the 50S ribosomal subunit. Contacts protein L32.

In Ureaplasma parvum serovar 3 (strain ATCC 27815 / 27 / NCTC 11736), this protein is Large ribosomal subunit protein bL17.